A 212-amino-acid polypeptide reads, in one-letter code: Peptide methionine sulfoxide reductase MsrA (212 aa).

Cys52 is an active-site residue.

It belongs to the MsrA Met sulfoxide reductase family.

The catalysed reaction is L-methionyl-[protein] + [thioredoxin]-disulfide + H2O = L-methionyl-(S)-S-oxide-[protein] + [thioredoxin]-dithiol. It carries out the reaction [thioredoxin]-disulfide + L-methionine + H2O = L-methionine (S)-S-oxide + [thioredoxin]-dithiol. Has an important function as a repair enzyme for proteins that have been inactivated by oxidation. Catalyzes the reversible oxidation-reduction of methionine sulfoxide in proteins to methionine. In Escherichia fergusonii (strain ATCC 35469 / DSM 13698 / CCUG 18766 / IAM 14443 / JCM 21226 / LMG 7866 / NBRC 102419 / NCTC 12128 / CDC 0568-73), this protein is Peptide methionine sulfoxide reductase MsrA.